The chain runs to 565 residues: Oxygen-dependent choline dehydrogenase (565 aa).

7–36 (DYIICGAGSAGNVLATRLTEDPGVTVLLLE) provides a ligand contact to FAD. The active-site Proton acceptor is histidine 474.

Belongs to the GMC oxidoreductase family. FAD serves as cofactor.

It carries out the reaction choline + A = betaine aldehyde + AH2. The enzyme catalyses betaine aldehyde + NAD(+) + H2O = glycine betaine + NADH + 2 H(+). It participates in amine and polyamine biosynthesis; betaine biosynthesis via choline pathway; betaine aldehyde from choline (cytochrome c reductase route): step 1/1. Involved in the biosynthesis of the osmoprotectant glycine betaine. Catalyzes the oxidation of choline to betaine aldehyde and betaine aldehyde to glycine betaine at the same rate. The sequence is that of Oxygen-dependent choline dehydrogenase from Burkholderia pseudomallei (strain 1710b).